A 95-amino-acid polypeptide reads, in one-letter code: MTDAVGSIDMPDAEDEAPESKKKSRKGGKRGKKGPLGRLALFYRQIVAELRKVVWPTRSQLTTYTSVVIVFVVVMIGLVTVLDIGFARVVKYVFG.

Residues 1–35 form a disordered region; it reads MTDAVGSIDMPDAEDEAPESKKKSRKGGKRGKKGP. Basic residues predominate over residues 22–35; the sequence is KKSRKGGKRGKKGP. Residues 67–87 form a helical membrane-spanning segment; the sequence is VVIVFVVVMIGLVTVLDIGFA.

Belongs to the SecE/SEC61-gamma family. As to quaternary structure, component of the Sec protein translocase complex. Heterotrimer consisting of SecY, SecE and SecG subunits. The heterotrimers can form oligomers, although 1 heterotrimer is thought to be able to translocate proteins. Interacts with the ribosome. Interacts with SecDF, and other proteins may be involved. Interacts with SecA.

It localises to the cell membrane. Its function is as follows. Essential subunit of the Sec protein translocation channel SecYEG. Clamps together the 2 halves of SecY. May contact the channel plug during translocation. This Streptomyces griseus protein is Protein translocase subunit SecE.